A 455-amino-acid chain; its full sequence is GTPase Der (455 aa).

EngA-type G domains follow at residues 4 to 169 and 178 to 355; these read PIVA…PKDQ and LRVS…GQHQ. Residues 10–17, 57–61, 120–123, 184–191, 233–237, and 298–301 contribute to the GTP site; these read GRPNVGKS, DTGGL, NKLE, DTAGI, and NKWD. The KH-like domain occupies 356–441; that stretch reads RRVSTSVLNE…PVRFIFRGKP (86 aa).

It belongs to the TRAFAC class TrmE-Era-EngA-EngB-Septin-like GTPase superfamily. EngA (Der) GTPase family. Associates with the 50S ribosomal subunit.

In terms of biological role, GTPase that plays an essential role in the late steps of ribosome biogenesis. In Gloeobacter violaceus (strain ATCC 29082 / PCC 7421), this protein is GTPase Der.